The sequence spans 290 residues: Fructose-1,6-bisphosphatase class 1 (290 aa).

Residues glutamate 78, aspartate 96, leucine 98, and aspartate 99 each coordinate Mg(2+). Residues 99-102, tyrosine 201, and lysine 226 each bind substrate; that span reads DGSS. Residue glutamate 232 participates in Mg(2+) binding.

The protein belongs to the FBPase class 1 family. Homotetramer. It depends on Mg(2+) as a cofactor.

It localises to the cytoplasm. It catalyses the reaction beta-D-fructose 1,6-bisphosphate + H2O = beta-D-fructose 6-phosphate + phosphate. It participates in carbohydrate biosynthesis; gluconeogenesis. In Helicobacter pylori (strain G27), this protein is Fructose-1,6-bisphosphatase class 1.